A 417-amino-acid polypeptide reads, in one-letter code: Paired box protein Pax-2 (417 aa).

Positions 16 to 142 form a DNA-binding region, paired; that stretch reads GHGGVNQLGG…SSINRIIRTK (127 aa). The segment at 19 to 75 is PAI subdomain; it reads GVNQLGGVFVNGRPLPDVVRQRIVELAHQGVRPCDISRQLRVSHGCVSKILGRYYET. The interval 94 to 142 is RED subdomain; the sequence is KVVDKIAEYKRQNPTMFAWEIRDRLLAEGICDNDTVPSVSSINRIIRTK. Phosphothreonine is present on Thr226. The tract at residues 304 to 325 is disordered; sequence KSSLSASTNPELGSNVSGTQTY. Over residues 305–325 the composition is skewed to polar residues; it reads SSLSASTNPELGSNVSGTQTY.

Interacts with ELGN3; the interaction targets PAX2 for destruction. Interacts with TLE4. In terms of tissue distribution, expressed in primitive cells of the kidney, ureter, eye, ear and central nervous system.

The protein localises to the nucleus. Functionally, transcription factor that may have a role in kidney cell differentiation. Has a critical role in the development of the urogenital tract, the eyes, and the CNS. This chain is Paired box protein Pax-2 (PAX2), found in Homo sapiens (Human).